A 216-amino-acid chain; its full sequence is ATP-dependent Clp protease proteolytic subunit (216 aa).

Catalysis depends on S103, which acts as the Nucleophile. H128 is a catalytic residue. Residues 197–216 are disordered; it reads RRPALPGDDAPRDVSEGPTP.

It belongs to the peptidase S14 family. Fourteen ClpP subunits assemble into 2 heptameric rings which stack back to back to give a disk-like structure with a central cavity, resembling the structure of eukaryotic proteasomes.

The protein localises to the cytoplasm. The enzyme catalyses Hydrolysis of proteins to small peptides in the presence of ATP and magnesium. alpha-casein is the usual test substrate. In the absence of ATP, only oligopeptides shorter than five residues are hydrolyzed (such as succinyl-Leu-Tyr-|-NHMec, and Leu-Tyr-Leu-|-Tyr-Trp, in which cleavage of the -Tyr-|-Leu- and -Tyr-|-Trp bonds also occurs).. In terms of biological role, cleaves peptides in various proteins in a process that requires ATP hydrolysis. Has a chymotrypsin-like activity. Plays a major role in the degradation of misfolded proteins. The chain is ATP-dependent Clp protease proteolytic subunit from Sphingopyxis alaskensis (strain DSM 13593 / LMG 18877 / RB2256) (Sphingomonas alaskensis).